The chain runs to 365 residues: NADH-quinone oxidoreductase subunit H (365 aa).

The next 8 membrane-spanning stretches (helical) occupy residues 27-47 (LLLI…LTFA), 99-119 (FLFL…WAVV), 133-153 (ALLY…IAGW), 168-188 (AAQV…VLMM), 206-226 (FLNW…ISGV), 268-288 (ILVA…PVDI), 294-314 (IPGV…FLWF), and 329-349 (LGWK…GAVM).

This sequence belongs to the complex I subunit 1 family. In terms of assembly, NDH-1 is composed of 14 different subunits. Subunits NuoA, H, J, K, L, M, N constitute the membrane sector of the complex.

It localises to the cell inner membrane. It carries out the reaction a quinone + NADH + 5 H(+)(in) = a quinol + NAD(+) + 4 H(+)(out). In terms of biological role, NDH-1 shuttles electrons from NADH, via FMN and iron-sulfur (Fe-S) centers, to quinones in the respiratory chain. The immediate electron acceptor for the enzyme in this species is believed to be ubiquinone. Couples the redox reaction to proton translocation (for every two electrons transferred, four hydrogen ions are translocated across the cytoplasmic membrane), and thus conserves the redox energy in a proton gradient. This subunit may bind ubiquinone. This chain is NADH-quinone oxidoreductase subunit H, found in Nitrosomonas eutropha (strain DSM 101675 / C91 / Nm57).